The chain runs to 626 residues: tRNA uridine 5-carboxymethylaminomethyl modification enzyme MnmG (626 aa).

Residue 13–18 (GGGHAG) participates in FAD binding. 273-287 (GPRYCPSIEDKIHRF) serves as a coordination point for NAD(+).

The protein belongs to the MnmG family. As to quaternary structure, homodimer. Heterotetramer of two MnmE and two MnmG subunits. The cofactor is FAD.

The protein resides in the cytoplasm. Functionally, NAD-binding protein involved in the addition of a carboxymethylaminomethyl (cmnm) group at the wobble position (U34) of certain tRNAs, forming tRNA-cmnm(5)s(2)U34. This is tRNA uridine 5-carboxymethylaminomethyl modification enzyme MnmG from Acinetobacter baumannii (strain SDF).